The primary structure comprises 290 residues: Concanavalin-A (290 aa).

The N-terminal stretch at 1-29 (MAISKKSSLFLPIFTFITMFLMVVNKVSS) is a signal peptide. D119 and R139 together coordinate a carbohydrate. Position 119 (D119) interacts with Ca(2+). The propeptide occupies 149 to 163 (VIRNSTTIDFNAAYN). N-linked (GlcNAc...) asparagine glycosylation occurs at N152. Positions 171 and 173 each coordinate Mn(2+). D173, Y175, N177, and D182 together coordinate Ca(2+). 2 residues coordinate Mn(2+): D182 and H187. An a carbohydrate-binding site is contributed by 262–263 (LY). A propeptide spanning residues 282 to 290 (EIPDIATVV) is cleaved from the precursor.

The protein belongs to the leguminous lectin family. Homotetramer. Post-translationally, the mature chain consists of residues 164-281 followed by 30-148. To form a mature chain the precursor undergoes further post-translational modification after removal of the signal sequence; cleavage after Asn at positions Asn-148, Asn-163, and Asn-281 is followed by transposition and ligation (By formation of a new peptide bond) of residues 164-281 and 30-148.

Functionally, glucose/D-mannose/rhamnose specific lectin. Has hemagglutinating activity towards rabbit erythrocytes. Has mitogenic activity towards murine splenocytes that is inhibited by glucose. Inhibits HIV-1 reverse transcriptase with an IC(50) of 35 uM. Has a potent antiproliferative activity against L1210 leukemia cells in vitro that is not inhibited by glucose. Inhibits translation in cell-free rabbit reticulocyte system with an IC(50) of 2.08 uM. Lacks anti-fungal activity against M.arachidicola, B.cenera and F.oxysporum. The chain is Concanavalin-A from Canavalia gladiata (Sword bean).